A 160-amino-acid chain; its full sequence is 2-C-methyl-D-erythritol 2,4-cyclodiphosphate synthase (160 aa).

A divalent metal cation-binding residues include aspartate 11 and histidine 13. Residues 11-13 and 37-38 contribute to the 4-CDP-2-C-methyl-D-erythritol 2-phosphate site; these read DVH and HS. Histidine 45 is a binding site for a divalent metal cation. 4-CDP-2-C-methyl-D-erythritol 2-phosphate is bound by residues 59–61 and arginine 145; that span reads DIG.

The protein belongs to the IspF family. In terms of assembly, homotrimer. Requires a divalent metal cation as cofactor.

The catalysed reaction is 4-CDP-2-C-methyl-D-erythritol 2-phosphate = 2-C-methyl-D-erythritol 2,4-cyclic diphosphate + CMP. It functions in the pathway isoprenoid biosynthesis; isopentenyl diphosphate biosynthesis via DXP pathway; isopentenyl diphosphate from 1-deoxy-D-xylulose 5-phosphate: step 4/6. In terms of biological role, involved in the biosynthesis of isopentenyl diphosphate (IPP) and dimethylallyl diphosphate (DMAPP), two major building blocks of isoprenoid compounds. Catalyzes the conversion of 4-diphosphocytidyl-2-C-methyl-D-erythritol 2-phosphate (CDP-ME2P) to 2-C-methyl-D-erythritol 2,4-cyclodiphosphate (ME-CPP) with a corresponding release of cytidine 5-monophosphate (CMP). This is 2-C-methyl-D-erythritol 2,4-cyclodiphosphate synthase from Neisseria meningitidis serogroup B (strain ATCC BAA-335 / MC58).